Here is a 421-residue protein sequence, read N- to C-terminus: Ankyrin repeat domain-containing protein 61 (421 aa).

ANK repeat units follow at residues 27–57, 74–103, 107–146, 166–195, 199–228, 233–272, 276–305, and 309–342; these read TLHSKLYEAIIKEDCNTIKTLLRNHPVNQPL, QPIFPIHLAAEYRKPQSLLCLLQHGADPEV, QGFTTLHLMLLNWPASSTTWSKPSTQIQKILMDIQNNAVL, NKHSALHLAIIHGTYPVLSFLAQNGAQVNA, SSMTPLHMAADILNKNMIETLIAFGANVNC, TGNTALKLAVCTASSKVGRLLAAGVGCIRLLLNNGAQVNA, EGQTALHEACFGGREAIISLLLEFEANVNI, and NGESPIYMYLQRSSNIRDRSLLARLLYRTYPLRL.

The polypeptide is Ankyrin repeat domain-containing protein 61 (Ankrd61) (Mus musculus (Mouse)).